Reading from the N-terminus, the 269-residue chain is Energy-coupling factor transporter ATP-binding protein EcfA1 (269 aa).

Positions 8–242 constitute an ABC transporter domain; sequence ITFNHVRFKY…GDGLTEIGLD (235 aa). 42–49 contributes to the ATP binding site; sequence GHNGSGKS.

It belongs to the ABC transporter superfamily. Energy-coupling factor EcfA family. Forms a stable energy-coupling factor (ECF) transporter complex composed of 2 membrane-embedded substrate-binding proteins (S component), 2 ATP-binding proteins (A component) and 2 transmembrane proteins (T component).

The protein localises to the cell membrane. In terms of biological role, ATP-binding (A) component of a common energy-coupling factor (ECF) ABC-transporter complex. Unlike classic ABC transporters this ECF transporter provides the energy necessary to transport a number of different substrates. The polypeptide is Energy-coupling factor transporter ATP-binding protein EcfA1 (Staphylococcus saprophyticus subsp. saprophyticus (strain ATCC 15305 / DSM 20229 / NCIMB 8711 / NCTC 7292 / S-41)).